Here is a 291-residue protein sequence, read N- to C-terminus: Acetylglutamate kinase (291 aa).

Residues 65-66, arginine 87, and asparagine 186 contribute to the substrate site; that span reads GG.

This sequence belongs to the acetylglutamate kinase family. ArgB subfamily.

It is found in the cytoplasm. The enzyme catalyses N-acetyl-L-glutamate + ATP = N-acetyl-L-glutamyl 5-phosphate + ADP. The protein operates within amino-acid biosynthesis; L-arginine biosynthesis; N(2)-acetyl-L-ornithine from L-glutamate: step 2/4. Its function is as follows. Catalyzes the ATP-dependent phosphorylation of N-acetyl-L-glutamate. The chain is Acetylglutamate kinase from Mycolicibacterium vanbaalenii (strain DSM 7251 / JCM 13017 / BCRC 16820 / KCTC 9966 / NRRL B-24157 / PYR-1) (Mycobacterium vanbaalenii).